The chain runs to 219 residues: Histone H1.4 (219 aa).

A compositionally biased stretch (low complexity) spans 1-15 (MSETAPAAPAAPAPA). Positions 1 to 41 (MSETAPAAPAAPAPAEKTPVKKKARKSAGAAKRKASGPPVS) are disordered. Residue serine 2 is modified to N-acetylserine. Residue serine 2 is modified to Phosphoserine. At lysine 17 the chain carries N6-acetyllysine. Threonine 18 carries the post-translational modification Phosphothreonine. A compositionally biased stretch (basic residues) spans 20-35 (VKKKARKSAGAAKRKA). Lysine 26 is subject to N6-acetyllysine; alternate. Lysine 26 is subject to N6-methyllysine; alternate. Position 34 is an N6-(beta-hydroxybutyryl)lysine; alternate (lysine 34). Lysine 34 carries the post-translational modification N6-succinyllysine; alternate. Serine 36 bears the Phosphoserine mark. Residues 36-109 (SGPPVSELIT…GASGSFKLNK (74 aa)) form the H15 domain. An N6-(beta-hydroxybutyryl)lysine modification is found at lysine 52. Arginine 54 carries the post-translational modification Citrulline. Lysine 64, lysine 85, lysine 90, and lysine 106 each carry N6-(beta-hydroxybutyryl)lysine. Positions 92 to 219 (TLVQTKGTGA…KPKKAAAKKK (128 aa)) are disordered. Basic residues predominate over residues 119 to 140 (KAKKAGAAKAKKPAGAAKKPKK). Threonine 146 is subject to Phosphothreonine. 2 stretches are compositionally biased toward basic residues: residues 149–160 (KSAKKTPKKAKK) and 168–185 (KKAKSPKKAKAAKPKKAP). Serine 150 is modified (ADP-ribosylserine). Serine 187 carries the phosphoserine modification. Positions 192–219 (KAVKPKAAKPKTAKPKAAKPKKAAAKKK) are enriched in basic residues.

It belongs to the histone H1/H5 family. In terms of processing, H1 histones are progressively phosphorylated during the cell cycle, becoming maximally phosphorylated during late G2 phase and M phase, and being dephosphorylated sharply thereafter. Post-translationally, acetylated at Lys-26. Deacetylated at Lys-26 by SIRT1. Citrullination at Arg-54 (H1R54ci) by PADI4 takes place within the DNA-binding site of H1 and results in its displacement from chromatin and global chromatin decondensation, thereby promoting pluripotency and stem cell maintenance. In terms of processing, ADP-ribosylated on Ser-150 in response to DNA damage.

It localises to the nucleus. It is found in the chromosome. Histone H1 protein binds to linker DNA between nucleosomes forming the macromolecular structure known as the chromatin fiber. Histones H1 are necessary for the condensation of nucleosome chains into higher-order structured fibers. Also acts as a regulator of individual gene transcription through chromatin remodeling, nucleosome spacing and DNA methylation. This Homo sapiens (Human) protein is Histone H1.4.